The chain runs to 551 residues: Probable alpha-glucosidase (551 aa).

Asp-212 serves as the catalytic Nucleophile. The active-site Proton donor is the Glu-272.

The protein belongs to the glycosyl hydrolase 13 family.

It catalyses the reaction Hydrolysis of terminal, non-reducing (1-&gt;4)-linked alpha-D-glucose residues with release of alpha-D-glucose.. This is Probable alpha-glucosidase (aglA) from Rhizobium meliloti (strain 1021) (Ensifer meliloti).